Here is a 273-residue protein sequence, read N- to C-terminus: Dermonecrotic toxin LruSicTox-alphaIC1b (273 aa).

Histidine 5 is an active-site residue. Residues glutamate 25 and aspartate 27 each coordinate Mg(2+). Residue histidine 41 is the Nucleophile of the active site. Cystine bridges form between cysteine 45–cysteine 51 and cysteine 47–cysteine 190. Aspartate 85 contributes to the Mg(2+) binding site.

This sequence belongs to the arthropod phospholipase D family. Class II subfamily. It depends on Mg(2+) as a cofactor. As to expression, expressed by the venom gland.

It localises to the secreted. The enzyme catalyses an N-(acyl)-sphingosylphosphocholine = an N-(acyl)-sphingosyl-1,3-cyclic phosphate + choline. It carries out the reaction an N-(acyl)-sphingosylphosphoethanolamine = an N-(acyl)-sphingosyl-1,3-cyclic phosphate + ethanolamine. It catalyses the reaction a 1-acyl-sn-glycero-3-phosphocholine = a 1-acyl-sn-glycero-2,3-cyclic phosphate + choline. The catalysed reaction is a 1-acyl-sn-glycero-3-phosphoethanolamine = a 1-acyl-sn-glycero-2,3-cyclic phosphate + ethanolamine. Dermonecrotic toxins cleave the phosphodiester linkage between the phosphate and headgroup of certain phospholipids (sphingolipid and lysolipid substrates), forming an alcohol (often choline) and a cyclic phosphate. This toxin acts on sphingomyelin (SM). It may also act on ceramide phosphoethanolamine (CPE), lysophosphatidylcholine (LPC) and lysophosphatidylethanolamine (LPE), but not on lysophosphatidylserine (LPS), and lysophosphatidylglycerol (LPG). It acts by transphosphatidylation, releasing exclusively cyclic phosphate products as second products. Induces dermonecrosis, hemolysis, increased vascular permeability, edema, inflammatory response, and platelet aggregation. This chain is Dermonecrotic toxin LruSicTox-alphaIC1b, found in Loxosceles rufescens (Mediterranean recluse spider).